Reading from the N-terminus, the 474-residue chain is Cyclin-dependent kinase 18 (474 aa).

A phosphoserine mark is found at serine 14, serine 74, serine 89, serine 98, serine 117, and serine 132. The interval 44 to 87 is disordered; it reads DLQLGPLGRDPLQECSTFSPTDSGEEPGQLSPGVQFQRRQNQRR. The region spanning 144–425 is the Protein kinase domain; sequence YVKLDKLGEG…AEAALSHPYF (282 aa). Residues 150–158 and lysine 173 contribute to the ATP site; that span reads LGEGTYATV. Aspartate 265 (proton acceptor) is an active-site residue. Phosphoserine is present on residues serine 440 and serine 443.

This sequence belongs to the protein kinase superfamily. CMGC Ser/Thr protein kinase family. CDC2/CDKX subfamily.

The catalysed reaction is L-seryl-[protein] + ATP = O-phospho-L-seryl-[protein] + ADP + H(+). The enzyme catalyses L-threonyl-[protein] + ATP = O-phospho-L-threonyl-[protein] + ADP + H(+). May play a role in signal transduction cascades in terminally differentiated cells. The sequence is that of Cyclin-dependent kinase 18 (CDK18) from Pongo abelii (Sumatran orangutan).